Reading from the N-terminus, the 734-residue chain is Amino-acid acetyltransferase, mitochondrial (734 aa).

Positions 384–433 are disordered; that stretch reads YSETSSRSTRAEADSNFNLRDDIPLSSFTEQKSGELEYSPRHQNDSPTQQ. Basic and acidic residues-rich tracts occupy residues 392–406 and 415–427; these read TRAE…RDDI and KSGE…RHQN. One can recognise an N-acetyltransferase domain in the interval 555–724; sequence GVPQISLTDP…YEAVCKTIEP (170 aa).

Belongs to the acetyltransferase family.

The protein resides in the mitochondrion. It carries out the reaction L-glutamate + acetyl-CoA = N-acetyl-L-glutamate + CoA + H(+). It participates in amino-acid biosynthesis; L-arginine biosynthesis; N(2)-acetyl-L-ornithine from L-glutamate: step 1/4. In terms of biological role, N-acetylglutamate synthase involved in arginine biosynthesis. The sequence is that of Amino-acid acetyltransferase, mitochondrial (arg2) from Botryotinia fuckeliana (strain B05.10) (Noble rot fungus).